An 889-amino-acid chain; its full sequence is Oxysterol-binding protein-related protein 8 (889 aa).

Met1 is modified (N-acetylmethionine). The disordered stretch occupies residues 1-129; sequence MEGGLADGEP…SLKVQKKNYR (129 aa). Ser14 is subject to Phosphoserine. Composition is skewed to polar residues over residues 28-46 and 62-71; these read VVANSDESQLLTPGKMSQR and PSLSPASPHS. Phosphoserine occurs at positions 65 and 68. Basic and acidic residues-rich tracts occupy residues 73-88, 95-109, and 116-129; these read GFERGKEDISQNKDES, SKSESKLYNGSEKDS, and TKKESLKVQKKNYR. A PH domain is found at 148-265; the sequence is VIVMADWLKI…WMDALELALK (118 aa). A phosphoserine mark is found at Ser314, Ser328, and Ser342. Residues 322 to 336 show a composition bias toward basic and acidic residues; that stretch reads KDQDMYSDKSDKEND. Residues 322–399 are disordered; the sequence is KDQDMYSDKS…AGEASQTETV (78 aa). The span at 346 to 363 shows a compositional bias: basic and acidic residues; that stretch reads VMGKSEESDTDTSERQDD. A 1,2-diacyl-sn-glycero-3-phospho-(1D-myo-inositol 4-phosphate) contacts are provided by residues 420–425, 482–485, and 514–515; these read LSKVVL, KPYN, and HH. Residues 420-425 and Asn485 contribute to the a 1,2-diacyl-sn-glycero-3-phospho-L-serine site; that span reads LSKVVL. Ser540 contacts a 1,2-diacyl-sn-glycero-3-phospho-L-serine. Lys706, Glu710, and Arg714 together coordinate a 1,2-diacyl-sn-glycero-3-phospho-(1D-myo-inositol 4-phosphate). The tract at residues 771-823 is disordered; sequence KHRTPMVSVPKMKHKPTRQQKKVAKGYSSPEPDIQDSSGSEAQSVKPSTRRKK. The segment covering 781–794 has biased composition (basic residues); that stretch reads KMKHKPTRQQKKVA. Positions 805 to 817 are enriched in polar residues; that stretch reads QDSSGSEAQSVKP. Phosphoserine is present on residues Ser807, Ser808, Ser810, and Ser814. A helical membrane pass occupies residues 871 to 888; it reads YFIIFLLILLQVIINFMF.

Belongs to the OSBP family. In terms of assembly, interacts with SPAG5. Interacts with NUP62. In terms of tissue distribution, widely expressed. Expressed at higher level in macrophages.

It localises to the endoplasmic reticulum membrane. Its subcellular location is the nucleus membrane. Its function is as follows. Lipid transporter involved in lipid countertransport between the endoplasmic reticulum and the plasma membrane: specifically exchanges phosphatidylserine with phosphatidylinositol 4-phosphate (PI4P), delivering phosphatidylserine to the plasma membrane in exchange for PI4P, which is degraded by the SAC1/SACM1L phosphatase in the endoplasmic reticulum. Binds phosphatidylserine and PI4P in a mutually exclusive manner. Binds oxysterol, 25-hydroxycholesterol and cholesterol. In Homo sapiens (Human), this protein is Oxysterol-binding protein-related protein 8 (OSBPL8).